A 1966-amino-acid chain; its full sequence is Dedicator of cytokinesis protein 4 (1966 aa).

In terms of domain architecture, SH3 spans 6-67; the sequence is EHEKYGVVIA…PSSYVHLKNA (62 aa). The residue at position 167 (Y167) is a Phosphotyrosine. Phosphothreonine is present on T193. In terms of domain architecture, C2 DOCK-type spans 401-574; the sequence is RNDLYITIER…ESFCITSFLC (174 aa). The DOCKER domain maps to 1190-1596; that stretch reads KTELNKEEMY…LGIQEFSACM (407 aa). 6 positions are modified to phosphoserine: S1599, S1607, S1614, S1618, S1620, and S1631. Disordered stretches follow at residues 1648–1729 and 1742–1966; these read SQAS…IYPT and IGDG…VSQL. Residues 1672 to 1703 are compositionally biased toward low complexity; sequence PSPSTSSLSSTHSASPNVTSSAPSSARASPLL. Phosphoserine is present on S1769. The SH3-binding motif lies at 1788 to 1794; it reads PPVPPRP. Residues 1795–1809 show a composition bias toward polar residues; that stretch reads TQTASPARHTTSVSP. Positions 1838 to 1863 are enriched in low complexity; that stretch reads SNSPVLSGSYSSGISSLSRCSTSETS. The segment covering 1864–1873 has biased composition (polar residues); that stretch reads GFENQVNEQS. The span at 1941–1954 shows a compositional bias: basic and acidic residues; it reads SHLENGARRTDPGP.

This sequence belongs to the DOCK family. In terms of assembly, interacts with nucleotide-free Rap1; functions as a guanine nucleotide exchange factor (GEF) for Rap1. Interacts (via DOCKER domain) with RAC1; functions as a guanine nucleotide exchange factor (GEF) for RAC1. Interacts with the SH3 domain of CRK. Interacts with FASLG. Interacts with ELMO2 and EPHA2; mediates activation of RAC1 by EPHA2. Interacts with USH1C (via PDZ 1 domain). In terms of tissue distribution, widely expressed at low level. Highly expressed in skeletal muscle, prostate and ovary. May be specifically expressed in the brain and eye.

It localises to the cell membrane. Its subcellular location is the cell projection. It is found in the cytoplasm. The protein localises to the cytosol. In terms of biological role, functions as a guanine nucleotide exchange factor (GEF) that promotes the exchange of GDP to GTP, converting inactive GDP-bound small GTPases into their active GTP-bound form. Involved in regulation of adherens junction between cells. Plays a role in cell migration. Its function is as follows. Has a higher guanine nucleotide exchange factor activity compared to other isoforms. The sequence is that of Dedicator of cytokinesis protein 4 (DOCK4) from Homo sapiens (Human).